The following is a 236-amino-acid chain: Large ribosomal subunit protein eL6 (236 aa).

This sequence belongs to the eukaryotic ribosomal protein eL6 family.

This chain is Large ribosomal subunit protein eL6 (rpl6), found in Dictyostelium discoideum (Social amoeba).